The following is an 86-amino-acid chain: Apolipoprotein C-I (86 aa).

The signal sequence occupies residues Met-1–Gly-26.

Belongs to the apolipoprotein C1 family.

It localises to the secreted. Inhibitor of lipoprotein binding to the low density lipoprotein (LDL) receptor, LDL receptor-related protein, and very low density lipoprotein (VLDL) receptor. Associates with high density lipoproteins (HDL) and the triacylglycerol-rich lipoproteins in the plasma and makes up about 10% of the protein of the VLDL and 2% of that of HDL. Appears to interfere directly with fatty acid uptake and is also the major plasma inhibitor of cholesteryl ester transfer protein (CETP). Binds free fatty acids and reduces their intracellular esterification. Modulates the interaction of APOE with beta-migrating VLDL and inhibits binding of beta-VLDL to the LDL receptor-related protein. This chain is Apolipoprotein C-I (APOC1), found in Plecturocebus moloch (Dusky titi monkey).